Consider the following 457-residue polypeptide: MQKYISEARLLLALAIPVILAQIAQTAMGFVDTVMAGGYSATDMAAVAIGTSIWLPAILFGHGLLLALTPVIAQLNGSGRRERIAHQVRQGFWLAGFVSVLIMLVLWNAGYIIRYMENIDPALADKAVGYLRALLWGAPGYLFFQVARNQCEGLAKAKPGMVMGFIGLLVNIPVNYIFIYGHFGMPELGGVGCGVATAAVYWVMFLAMVSYIKRARSMRDIRNEKGTAKPEPAVMKRLIQLGLPIALALFLEVTLFAVVALLVSPLGIVDVAGHQIALNFSSLMFVLPMSLAAAVTIRVGYRLGQGSTLDAQTAARTGLMVGVCMATLTAIFTVSLREQIALLYNDNPEVVTLAAHLMLLAAVYQISDSIQVIGSGILRGYKDTRSIFYITFTAYWVLGLPSGYILALTDLVVEPMGPAGFWIGFIIGLTSAAIMMMLRMRFLQRMPSAIILQRASR.

Over 1 to 10 (MQKYISEARL) the chain is Cytoplasmic. Residues 11 to 31 (LLALAIPVILAQIAQTAMGFV) form a helical membrane-spanning segment. Residues 32–52 (DTVMAGGYSATDMAAVAIGTS) are Periplasmic-facing. Residues 53–73 (IWLPAILFGHGLLLALTPVIA) form a helical membrane-spanning segment. The Cytoplasmic portion of the chain corresponds to 74–92 (QLNGSGRRERIAHQVRQGF). Residues 93-113 (WLAGFVSVLIMLVLWNAGYII) form a helical membrane-spanning segment. Over 114–126 (RYMENIDPALADK) the chain is Periplasmic. The chain crosses the membrane as a helical span at residues 127 to 147 (AVGYLRALLWGAPGYLFFQVA). Over 148-159 (RNQCEGLAKAKP) the chain is Cytoplasmic. A helical membrane pass occupies residues 160–180 (GMVMGFIGLLVNIPVNYIFIY). At 181-188 (GHFGMPEL) the chain is on the periplasmic side. Residues 189–209 (GGVGCGVATAAVYWVMFLAMV) traverse the membrane as a helical segment. Over 210–242 (SYIKRARSMRDIRNEKGTAKPEPAVMKRLIQLG) the chain is Cytoplasmic. A helical transmembrane segment spans residues 243–263 (LPIALALFLEVTLFAVVALLV). Residues 264 to 275 (SPLGIVDVAGHQ) are Periplasmic-facing. A helical transmembrane segment spans residues 276-296 (IALNFSSLMFVLPMSLAAAVT). Over 297-313 (IRVGYRLGQGSTLDAQT) the chain is Cytoplasmic. Residues 314–334 (AARTGLMVGVCMATLTAIFTV) form a helical membrane-spanning segment. Over 335 to 349 (SLREQIALLYNDNPE) the chain is Periplasmic. The helical transmembrane segment at 350 to 370 (VVTLAAHLMLLAAVYQISDSI) threads the bilayer. Over 371 to 386 (QVIGSGILRGYKDTRS) the chain is Cytoplasmic. The chain crosses the membrane as a helical span at residues 387–407 (IFYITFTAYWVLGLPSGYILA). The Periplasmic portion of the chain corresponds to 408-417 (LTDLVVEPMG). Residues 418-438 (PAGFWIGFIIGLTSAAIMMML) form a helical membrane-spanning segment. At 439 to 457 (RMRFLQRMPSAIILQRASR) the chain is on the cytoplasmic side.

The protein belongs to the multi antimicrobial extrusion (MATE) (TC 2.A.66.1) family. MdtK subfamily.

The protein resides in the cell inner membrane. Multidrug efflux pump that functions probably as a Na(+)/drug antiporter. This Shigella flexneri serotype 5b (strain 8401) protein is Multidrug resistance protein MdtK.